An 87-amino-acid polypeptide reads, in one-letter code: uncharacterized protein (87 aa).

A helical membrane pass occupies residues 25–47; sequence FFWEVCNMILFIIIALCGYLLFS.

The protein resides in the membrane. This is an uncharacterized protein from Bacillus subtilis (strain 168).